The primary structure comprises 482 residues: Probable glycine dehydrogenase (decarboxylating) subunit 2 (482 aa).

Lys-267 carries the N6-(pyridoxal phosphate)lysine modification.

It belongs to the GcvP family. C-terminal subunit subfamily. In terms of assembly, the glycine cleavage system is composed of four proteins: P, T, L and H. In this organism, the P 'protein' is a heterodimer of two subunits. The cofactor is pyridoxal 5'-phosphate.

It catalyses the reaction N(6)-[(R)-lipoyl]-L-lysyl-[glycine-cleavage complex H protein] + glycine + H(+) = N(6)-[(R)-S(8)-aminomethyldihydrolipoyl]-L-lysyl-[glycine-cleavage complex H protein] + CO2. Its function is as follows. The glycine cleavage system catalyzes the degradation of glycine. The P protein binds the alpha-amino group of glycine through its pyridoxal phosphate cofactor; CO(2) is released and the remaining methylamine moiety is then transferred to the lipoamide cofactor of the H protein. The protein is Probable glycine dehydrogenase (decarboxylating) subunit 2 of Aquifex aeolicus (strain VF5).